Consider the following 115-residue polypeptide: Non-specific lipid-transfer protein 4.2 (115 aa).

Residues 1–25 (MARAAATQLVLVAMVAAMLIVATDA) form the signal peptide. 4 cysteine pairs are disulfide-bonded: Cys29-Cys77, Cys39-Cys54, Cys55-Cys97, and Cys75-Cys111.

The protein belongs to the plant LTP family.

Its function is as follows. Plant non-specific lipid-transfer proteins transfer phospholipids as well as galactolipids across membranes. May play a role in wax or cutin deposition in the cell walls of expanding epidermal cells and certain secretory tissues. The sequence is that of Non-specific lipid-transfer protein 4.2 (LTP4.2) from Hordeum vulgare (Barley).